The primary structure comprises 1391 residues: Nuclear pore complex protein Nup155 (1391 aa).

Ser526 carries an O-linked (GlcNAc) serine glycan. Disordered regions lie at residues 604–630 and 985–1012; these read SSSP…AQPP and QSKA…NMLS. Ser1057 carries the post-translational modification Phosphoserine.

This sequence belongs to the non-repetitive/WGA-negative nucleoporin family. Interacts with GLE1 and NUP35/NUP53. Able to form a heterotrimer with GLE1 and NUP42 in vitro. Forms a complex with NUP35, NUP93, NUP205 and lamin B. Phosphorylated. Phosphorylation and dephosphorylation may be important for the function of NUP155 and may play a role in the reversible disassembly of the nuclear pore complex during mitosis. Post-translationally, disulfide-linked to NUP62. The inner channel of the NPC has a different redox environment from the cytoplasm and allows the formation of interchain disulfide bonds between some nucleoporins, the significant increase of these linkages upon oxidative stress reduces the permeability of the NPC.

It localises to the nucleus. The protein resides in the nuclear pore complex. It is found in the nucleus membrane. Its function is as follows. Essential component of nuclear pore complex. Could be essessential for embryogenesis. Nucleoporins may be involved both in binding and translocating proteins during nucleocytoplasmic transport. In Mus musculus (Mouse), this protein is Nuclear pore complex protein Nup155 (Nup155).